The following is a 159-amino-acid chain: Transcription elongation factor GreA (159 aa).

The protein belongs to the GreA/GreB family.

Its function is as follows. Necessary for efficient RNA polymerase transcription elongation past template-encoded arresting sites. The arresting sites in DNA have the property of trapping a certain fraction of elongating RNA polymerases that pass through, resulting in locked ternary complexes. Cleavage of the nascent transcript by cleavage factors such as GreA or GreB allows the resumption of elongation from the new 3'terminus. GreA releases sequences of 2 to 3 nucleotides. This is Transcription elongation factor GreA from Buchnera aphidicola subsp. Cinara cedri (strain Cc).